The sequence spans 807 residues: Leucine--tRNA ligase (807 aa).

Positions Pro-40 to His-51 match the 'HIGH' region motif. The short motif at Lys-576–Ser-580 is the 'KMSKS' region element. Lys-579 is a binding site for ATP.

Belongs to the class-I aminoacyl-tRNA synthetase family.

The protein resides in the cytoplasm. The catalysed reaction is tRNA(Leu) + L-leucine + ATP = L-leucyl-tRNA(Leu) + AMP + diphosphate. This Chlorobaculum tepidum (strain ATCC 49652 / DSM 12025 / NBRC 103806 / TLS) (Chlorobium tepidum) protein is Leucine--tRNA ligase.